The chain runs to 281 residues: Pantothenate synthetase (281 aa).

Position 26-33 (26-33 (MGYLHQGH)) interacts with ATP. His-33 acts as the Proton donor in catalysis. Gln-57 serves as a coordination point for (R)-pantoate. Residue Gln-57 participates in beta-alanine binding. 143–146 (GQKD) serves as a coordination point for ATP. Gln-149 is a binding site for (R)-pantoate. Residues Val-172 and 180 to 183 (LSSR) contribute to the ATP site.

Belongs to the pantothenate synthetase family. Homodimer.

It is found in the cytoplasm. The enzyme catalyses (R)-pantoate + beta-alanine + ATP = (R)-pantothenate + AMP + diphosphate + H(+). Its pathway is cofactor biosynthesis; (R)-pantothenate biosynthesis; (R)-pantothenate from (R)-pantoate and beta-alanine: step 1/1. In terms of biological role, catalyzes the condensation of pantoate with beta-alanine in an ATP-dependent reaction via a pantoyl-adenylate intermediate. The chain is Pantothenate synthetase from Chloroflexus aurantiacus (strain ATCC 29366 / DSM 635 / J-10-fl).